A 263-amino-acid chain; its full sequence is Small ribosomal subunit protein uS2 (263 aa).

Residues 223–246 (KSLLEQDSDANADEAEVSQEEKDA) are disordered. Over residues 228 to 240 (QDSDANADEAEVS) the composition is skewed to acidic residues.

It belongs to the universal ribosomal protein uS2 family.

The protein is Small ribosomal subunit protein uS2 of Campylobacter curvus (strain 525.92).